Reading from the N-terminus, the 436-residue chain is APO protein 1, chloroplastic (436 aa).

A chloroplast-targeting transit peptide spans 1-47 (MLLVSPACRGVYLQTIDPKPIDFSARASYALCFQIPTSIPKRECLMR). 2 APO domains span residues 155–240 (ACSE…EIPE) and 329–414 (ACGY…RVPQ).

Belongs to the APO family. In terms of tissue distribution, expressed at low level. Expressed at higher level in leaves. Expressed at lower level in roots, stems, siliques and flowers.

It is found in the plastid. Its subcellular location is the chloroplast. Functionally, involved in the stable assembly of several 4Fe-4S cluster-containing complexes of chloroplasts. May participate in 4Fe-4S cofactor incorporation into psaA and/or psaB during translation. The sequence is that of APO protein 1, chloroplastic (APO1) from Arabidopsis thaliana (Mouse-ear cress).